The primary structure comprises 719 residues: Fatty acid oxidation complex subunit alpha (719 aa).

An enoyl-CoA hydratase/isomerase region spans residues 1 to 190 (MVYQGNRITV…KLGLVDATVA (190 aa)). D298 lines the substrate pocket. The interval 313-719 (HDINEAAVLG…AAGETFYATA (407 aa)) is 3-hydroxyacyl-CoA dehydrogenase. NAD(+) is bound by residues M326, D345, 402–404 (VVE), K409, and S431. H452 serves as the catalytic For 3-hydroxyacyl-CoA dehydrogenase activity. N455 is a binding site for NAD(+). Residue N502 participates in substrate binding.

The protein in the N-terminal section; belongs to the enoyl-CoA hydratase/isomerase family. It in the C-terminal section; belongs to the 3-hydroxyacyl-CoA dehydrogenase family. In terms of assembly, heterotetramer of two alpha chains (FadB) and two beta chains (FadA).

It catalyses the reaction a (3S)-3-hydroxyacyl-CoA + NAD(+) = a 3-oxoacyl-CoA + NADH + H(+). The enzyme catalyses a (3S)-3-hydroxyacyl-CoA = a (2E)-enoyl-CoA + H2O. It carries out the reaction a 4-saturated-(3S)-3-hydroxyacyl-CoA = a (3E)-enoyl-CoA + H2O. The catalysed reaction is (3S)-3-hydroxybutanoyl-CoA = (3R)-3-hydroxybutanoyl-CoA. It catalyses the reaction a (3Z)-enoyl-CoA = a 4-saturated (2E)-enoyl-CoA. The enzyme catalyses a (3E)-enoyl-CoA = a 4-saturated (2E)-enoyl-CoA. The protein operates within lipid metabolism; fatty acid beta-oxidation. Involved in the aerobic and anaerobic degradation of long-chain fatty acids via beta-oxidation cycle. Catalyzes the formation of 3-oxoacyl-CoA from enoyl-CoA via L-3-hydroxyacyl-CoA. It can also use D-3-hydroxyacyl-CoA and cis-3-enoyl-CoA as substrate. This is Fatty acid oxidation complex subunit alpha from Psychrobacter cryohalolentis (strain ATCC BAA-1226 / DSM 17306 / VKM B-2378 / K5).